The chain runs to 164 residues: Phosphopantetheine adenylyltransferase (164 aa).

Substrate is bound at residue serine 9. ATP contacts are provided by residues 9-10 (SF) and histidine 17. The substrate site is built by lysine 41, valine 78, and arginine 92. ATP-binding positions include 93 to 95 (GLR), glutamate 103, and 128 to 134 (SRPITAT).

This sequence belongs to the bacterial CoaD family. As to quaternary structure, homohexamer. Requires Mg(2+) as cofactor.

It localises to the cytoplasm. It carries out the reaction (R)-4'-phosphopantetheine + ATP + H(+) = 3'-dephospho-CoA + diphosphate. It participates in cofactor biosynthesis; coenzyme A biosynthesis; CoA from (R)-pantothenate: step 4/5. Functionally, reversibly transfers an adenylyl group from ATP to 4'-phosphopantetheine, yielding dephospho-CoA (dPCoA) and pyrophosphate. The sequence is that of Phosphopantetheine adenylyltransferase from Rhizobium leguminosarum bv. trifolii (strain WSM2304).